Here is a 92-residue protein sequence, read N- to C-terminus: Large ribosomal subunit protein eL43 (92 aa).

A C4-type zinc finger spans residues 39-60; the sequence is CQFCGKDAMKRQAVGIWGCKSC.

It belongs to the eukaryotic ribosomal protein eL43 family.

The chain is Large ribosomal subunit protein eL43 (RPL37A) from Cryptochiton stelleri (Giant gumboot chiton).